The sequence spans 125 residues: Mitochondrial import inner membrane translocase subunit tim16-A (125 aa).

The tract at residues 58–110 is J-like; it reads EAQQILNVSKLTPEEIQKNYEHLFKVNDKGLGGSFYLQSKVVRAKERLDQEME.

This sequence belongs to the TIM16/PAM16 family. In terms of assembly, probable component of the PAM complex at least composed of 1 mitochondrial HSP70 protein, 1 GRPE, 1 TIMM44, 1 TIMM16/PAM16 and 1 TIMM14. Associates with the TIM23 complex.

The protein resides in the mitochondrion inner membrane. In terms of biological role, regulates ATP-dependent protein translocation into the mitochondrial matrix. This is Mitochondrial import inner membrane translocase subunit tim16-A (pam16-a) from Xenopus laevis (African clawed frog).